Here is a 166-residue protein sequence, read N- to C-terminus: Ribosome maturation factor RimP (166 aa).

It belongs to the RimP family.

It is found in the cytoplasm. Required for maturation of 30S ribosomal subunits. This Psychrobacter sp. (strain PRwf-1) protein is Ribosome maturation factor RimP.